Reading from the N-terminus, the 421-residue chain is Gamma-glutamyl phosphate reductase (421 aa).

The protein belongs to the gamma-glutamyl phosphate reductase family.

It localises to the cytoplasm. It carries out the reaction L-glutamate 5-semialdehyde + phosphate + NADP(+) = L-glutamyl 5-phosphate + NADPH + H(+). Its pathway is amino-acid biosynthesis; L-proline biosynthesis; L-glutamate 5-semialdehyde from L-glutamate: step 2/2. Functionally, catalyzes the NADPH-dependent reduction of L-glutamate 5-phosphate into L-glutamate 5-semialdehyde and phosphate. The product spontaneously undergoes cyclization to form 1-pyrroline-5-carboxylate. This is Gamma-glutamyl phosphate reductase from Brucella suis biovar 1 (strain 1330).